The following is a 277-amino-acid chain: Putative envelope-preserving system protein Rv2742c (277 aa).

Over residues 31–54 the composition is skewed to basic and acidic residues; the sequence is RDENRQRHAQVDVQRRRDQPERGQ. Disordered regions lie at residues 31 to 70, 113 to 133, and 180 to 210; these read RDEN…PDGR, QGSP…RLGR, and RQGS…HTAD. The segment covering 116–133 has biased composition (basic residues); that stretch reads PRRRERRRGQTAHQRLGR.

In terms of assembly, interacts with Rv2743c.

Involved in preservation of envelope integrity and tolerance to surface stress. Reverses the inhibitory effect of PspA on ClgR activity. Facilitates intracellular growth of M.tuberculosis. This chain is Putative envelope-preserving system protein Rv2742c, found in Mycobacterium tuberculosis (strain ATCC 25618 / H37Rv).